Reading from the N-terminus, the 393-residue chain is SH3 domain-binding protein 5-like (393 aa).

Positions 1–58 (MAELRQVPGGRETPQGELRPEVVEDEVPRSPVAEEPGGGGSSSSEAKLSPREEEELDP) are disordered. Thr-13 is modified (phosphothreonine). Residues 18–28 (LRPEVVEDEVP) show a composition bias toward basic and acidic residues. Ser-30 and Ser-49 each carry phosphoserine. Coiled-coil stretches lie at residues 59–140 (RIQE…YERA) and 169–272 (WQEM…EQIH). The disordered stretch occupies residues 273–332 (ARRRGGLPPHPLGPRRSSPVGAEAGPEDMEDGDSGIEGAEGAGLEEGSSLGPGPAPDTDT). Residues 297–306 (GPEDMEDGDS) show a composition bias toward acidic residues. Low complexity predominate over residues 317–332 (EEGSSLGPGPAPDTDT). A phosphoserine mark is found at Ser-343, Ser-350, Ser-358, Ser-362, and Ser-378. The segment at 362–393 (SLDGQELGTRSGGRRGSDGGARGGRHQRSVSL) is disordered. Basic residues predominate over residues 384–393 (GGRHQRSVSL).

This sequence belongs to the SH3BP5 family.

Functions as a guanine nucleotide exchange factor (GEF) for RAB11A. The polypeptide is SH3 domain-binding protein 5-like (SH3BP5L) (Homo sapiens (Human)).